We begin with the raw amino-acid sequence, 154 residues long: Methylglyoxal synthase (154 aa).

The region spanning 1 to 154 (MELTTRTIAA…RYMQQRLDLK (154 aa)) is the MGS-like domain. Substrate is bound by residues His-19, Lys-23, 45 to 48 (TGTT), and 65 to 66 (SG). The Proton donor/acceptor role is filled by Asp-71. Position 98 (His-98) interacts with substrate.

Belongs to the methylglyoxal synthase family.

It catalyses the reaction dihydroxyacetone phosphate = methylglyoxal + phosphate. Catalyzes the formation of methylglyoxal from dihydroxyacetone phosphate. In Yersinia pseudotuberculosis serotype O:1b (strain IP 31758), this protein is Methylglyoxal synthase.